Consider the following 354-residue polypeptide: UDP-3-O-acylglucosamine N-acyltransferase (354 aa).

Histidine 245 acts as the Proton acceptor in catalysis.

The protein belongs to the transferase hexapeptide repeat family. LpxD subfamily. As to quaternary structure, homotrimer.

It carries out the reaction a UDP-3-O-[(3R)-3-hydroxyacyl]-alpha-D-glucosamine + a (3R)-hydroxyacyl-[ACP] = a UDP-2-N,3-O-bis[(3R)-3-hydroxyacyl]-alpha-D-glucosamine + holo-[ACP] + H(+). It participates in bacterial outer membrane biogenesis; LPS lipid A biosynthesis. Catalyzes the N-acylation of UDP-3-O-acylglucosamine using 3-hydroxyacyl-ACP as the acyl donor. Is involved in the biosynthesis of lipid A, a phosphorylated glycolipid that anchors the lipopolysaccharide to the outer membrane of the cell. The polypeptide is UDP-3-O-acylglucosamine N-acyltransferase (Anaeromyxobacter dehalogenans (strain 2CP-1 / ATCC BAA-258)).